Consider the following 83-residue polypeptide: Large ribosomal subunit protein bL31B (83 aa).

Belongs to the bacterial ribosomal protein bL31 family. Type B subfamily. As to quaternary structure, part of the 50S ribosomal subunit.

The protein is Large ribosomal subunit protein bL31B of Bacteroides fragilis (strain ATCC 25285 / DSM 2151 / CCUG 4856 / JCM 11019 / LMG 10263 / NCTC 9343 / Onslow / VPI 2553 / EN-2).